The chain runs to 390 residues: cAMP-dependent protein kinase regulatory subunit (390 aa).

Residues 1-17 are compositionally biased toward polar residues; that stretch reads MSASGFTSPFGANSNPF. A disordered region spans residues 1 to 81; it reads MSASGFTSPF…RPQNPDGYPA (81 aa). The segment at 1–129 is dimerization and phosphorylation; the sequence is MSASGFTSPF…RLKKAIQGNF (129 aa). At Ser-90 the chain carries Phosphoserine. Residues 130–261, Glu-208, Arg-217, 262–383, Glu-329, and Arg-338 each bind 3',5'-cyclic AMP; these read LFSH…EEVP and ILST…GVEE.

It belongs to the cAMP-dependent kinase regulatory chain family. In terms of assembly, tetramer, composed of 2 regulatory (R) and 2 catalytic (C) subunits. In the presence of cAMP it dissociates into 2 active monomeric C subunits and an R dimer.

The polypeptide is cAMP-dependent protein kinase regulatory subunit (SUM1) (Pyricularia oryzae (strain 70-15 / ATCC MYA-4617 / FGSC 8958) (Rice blast fungus)).